The primary structure comprises 432 residues: CinA-like protein (432 aa).

This sequence belongs to the CinA family.

In Colwellia psychrerythraea (strain 34H / ATCC BAA-681) (Vibrio psychroerythus), this protein is CinA-like protein.